We begin with the raw amino-acid sequence, 145 residues long: 3-hydroxyacyl-[acyl-carrier-protein] dehydratase FabZ (145 aa).

His47 is a catalytic residue.

The protein belongs to the thioester dehydratase family. FabZ subfamily.

It localises to the cytoplasm. The enzyme catalyses a (3R)-hydroxyacyl-[ACP] = a (2E)-enoyl-[ACP] + H2O. Its function is as follows. Involved in unsaturated fatty acids biosynthesis. Catalyzes the dehydration of short chain beta-hydroxyacyl-ACPs and long chain saturated and unsaturated beta-hydroxyacyl-ACPs. The chain is 3-hydroxyacyl-[acyl-carrier-protein] dehydratase FabZ from Geotalea uraniireducens (strain Rf4) (Geobacter uraniireducens).